The following is a 361-amino-acid chain: D-alanine--D-alanine ligase (361 aa).

Residues 139–336 (KLLLKEKEIS…FSQIIDNMIN (198 aa)) enclose the ATP-grasp domain. An ATP-binding site is contributed by 167–222 (EKNLGYPMIVKPARLGSSIGVSKVVDRKNFEEAVKNVLLFDNKVLVEKWINAREIN). Positions 296, 307, and 309 each coordinate Mg(2+).

Belongs to the D-alanine--D-alanine ligase family. Mg(2+) serves as cofactor. Requires Mn(2+) as cofactor.

The protein localises to the cytoplasm. The enzyme catalyses 2 D-alanine + ATP = D-alanyl-D-alanine + ADP + phosphate + H(+). It participates in cell wall biogenesis; peptidoglycan biosynthesis. Cell wall formation. The protein is D-alanine--D-alanine ligase of Thermosipho melanesiensis (strain DSM 12029 / CIP 104789 / BI429).